The sequence spans 493 residues: Cysteine--tRNA ligase (493 aa).

Position 29 (cysteine 29) interacts with Zn(2+). Positions valine 31–histidine 41 match the 'HIGH' region motif. The segment at lysine 154 to lysine 179 is disordered. Zn(2+) contacts are provided by cysteine 213, histidine 238, and glutamate 242. A 'KMSKS' region motif is present at residues lysine 270–serine 274. Lysine 273 provides a ligand contact to ATP.

This sequence belongs to the class-I aminoacyl-tRNA synthetase family. As to quaternary structure, monomer. It depends on Zn(2+) as a cofactor.

The protein localises to the cytoplasm. The catalysed reaction is tRNA(Cys) + L-cysteine + ATP = L-cysteinyl-tRNA(Cys) + AMP + diphosphate. The sequence is that of Cysteine--tRNA ligase from Synechococcus sp. (strain CC9605).